The sequence spans 65 residues: Large ribosomal subunit protein bL35c (65 aa).

Residues 25 to 44 are compositionally biased toward basic residues; it reads HKASKSHLLQKKSSKQRRHL. The interval 25–45 is disordered; it reads HKASKSHLLQKKSSKQRRHLS.

Belongs to the bacterial ribosomal protein bL35 family.

It is found in the plastid. The protein localises to the chloroplast. The protein is Large ribosomal subunit protein bL35c of Pyropia yezoensis (Susabi-nori).